We begin with the raw amino-acid sequence, 91 residues long: Elongation factor 1-beta (91 aa).

Belongs to the EF-1-beta/EF-1-delta family.

Functionally, promotes the exchange of GDP for GTP in EF-1-alpha/GDP, thus allowing the regeneration of EF-1-alpha/GTP that could then be used to form the ternary complex EF-1-alpha/GTP/AAtRNA. This chain is Elongation factor 1-beta, found in Metallosphaera sedula (strain ATCC 51363 / DSM 5348 / JCM 9185 / NBRC 15509 / TH2).